Reading from the N-terminus, the 184-residue chain is Cysteine-rich atrial secretory protein (184 aa).

A signal peptide spans 1 to 26 (MATFQAHFFAAVMCVGVLGLSKLCGA). Intrachain disulfides connect Cys-29–Cys-34, Cys-65–Cys-111, Cys-75–Cys-82, Cys-123–Cys-155, and Cys-135–Cys-144. Asn-74 is a glycosylation site (N-linked (GlcNAc...) asparagine).

In terms of processing, N-glycosylated. In terms of tissue distribution, highly expressed in atrium. Moderately expressed in the pericardium, pulmonary vein, nephridium, arteria anterior, ovotestis and connective tissue. Low expression found in intestine, lung plexus, diaphragm, subesophageal ganglion, ventricle and digestive gland. Very low expression found in columellar retractor, pedal nerves and cerebral ganglion. Not expressed in hemocytes.

The protein resides in the secreted. The chain is Cysteine-rich atrial secretory protein from Achatina achatina (Giant Ghana snail).